Reading from the N-terminus, the 166-residue chain is Large ribosomal subunit protein uL10 (166 aa).

It belongs to the universal ribosomal protein uL10 family. As to quaternary structure, part of the ribosomal stalk of the 50S ribosomal subunit. The N-terminus interacts with L11 and the large rRNA to form the base of the stalk. The C-terminus forms an elongated spine to which L12 dimers bind in a sequential fashion forming a multimeric L10(L12)X complex.

In terms of biological role, forms part of the ribosomal stalk, playing a central role in the interaction of the ribosome with GTP-bound translation factors. This is Large ribosomal subunit protein uL10 (rplJ) from Neisseria meningitidis serogroup A / serotype 4A (strain DSM 15465 / Z2491).